The primary structure comprises 1271 residues: SR-related and CTD-associated factor 8 (1271 aa).

Positions 1 to 139 constitute a CID domain; it reads MEAVKTFNSE…PLLDMAAGIP (139 aa). Threonine 6 carries the phosphothreonine modification. Residue lysine 18 forms a Glycyl lysine isopeptide (Lys-Gly) (interchain with G-Cter in SUMO1) linkage. The segment covering 270-283 has biased composition (basic and acidic residues); that stretch reads GEDSEHSEEPKKEI. 3 disordered regions span residues 270–289, 322–354, and 384–468; these read GEDS…SQLS, QQQP…SQQH, and EEVF…PPIR. The residue at position 273 (serine 273) is a Phosphoserine. Polar residues predominate over residues 327–354; it reads KATPQDSQEGTFGSEHSASPSQGSSQQH. Basic residues predominate over residues 394-443; it reads VAVRSRSRTHSRSRSRSPRKRRSRSRSGSRKRKHRKRSRSRSRERKRKSS. Basic and acidic residues predominate over residues 447-461; that stretch reads SSERRAREREKERQK. The RRM domain maps to 477–551; that stretch reads TTLWVGQVDK…KVIKIAWALN (75 aa). Threonine 615 bears the Phosphothreonine mark. Serine 617 and serine 779 each carry phosphoserine. Residues 899-918 are disordered; sequence TQPPAGPQNLPPLSIPNQRM. Residues 902–912 show a composition bias toward pro residues; it reads PAGPQNLPPLS. Asymmetric dimethylarginine is present on residues arginine 917, arginine 927, and arginine 938. Pro residues-rich tracts occupy residues 945–956 and 963–972; these read GIPPQRGIPPPS and HPPPRGPFPP. Positions 945–1064 are disordered; that stretch reads GIPPQRGIPP…DGRDHFGRPP (120 aa). Composition is skewed to basic and acidic residues over residues 1011 to 1027 and 1034 to 1064; these read EGDR…RESI and DVRD…GRPP. At arginine 1073 the chain carries Asymmetric dimethylarginine. The tract at residues 1198–1271 is disordered; the sequence is YFEGATSQRK…VVESTETEGT (74 aa). Over residues 1255–1271 the composition is skewed to acidic residues; it reads ADIESEPVVESTETEGT.

As to quaternary structure, interacts with POLR2A; via C-terminal heptapeptide repeat domain (CTD) phosphorylated at 'Ser-2' and 'Ser-5'. Identified in a complex with CDC5L and other spliceosomal proteins.

It localises to the nucleus. Its subcellular location is the nucleus matrix. Anti-terminator protein required to prevent early mRNA termination during transcription. Together with SCAF4, acts by suppressing the use of early, alternative poly(A) sites, thereby preventing the accumulation of non-functional truncated proteins. Mechanistically, associates with the phosphorylated C-terminal heptapeptide repeat domain (CTD) of the largest RNA polymerase II subunit (POLR2A), and subsequently binds nascent RNA upstream of early polyadenylation sites to prevent premature mRNA transcript cleavage and polyadenylation. Independently of SCAF4, also acts as a positive regulator of transcript elongation. The chain is SR-related and CTD-associated factor 8 from Homo sapiens (Human).